Reading from the N-terminus, the 54-residue chain is uncharacterized protein (54 aa).

Residues 21–43 traverse the membrane as a helical segment; that stretch reads SYVVCLYMCGSDCACICVLACVV.

It localises to the membrane. This is an uncharacterized protein from Saccharomyces cerevisiae (strain ATCC 204508 / S288c) (Baker's yeast).